The following is a 402-amino-acid chain: MKAGIFLVGTELLNGATIDTNSIYIAEELNKYGIEIEFKMTVRDVMSEITKALTYAKKNVDLVILTGGLGPTDDDITKEAMAKFLKKKLVVDEKEKKELLKKYKAYKNPNKTNFKEVEKPEGAVSFKNDVGMAPAVYIDGMVAFPGFPNELKNMFPKFLKYYVKENNLKSQIYIKDIITYGIGESVLETTVKDLFTEGDIFYEFLVKDYGTLIRLQTKIENKKNVAKIVKKLYNRISEFIIGEDDDRIENTIYECLNLGEKPLTISTAESCTGGMVASKLIEVPGISENFIESIVSYSNEAKIKRLKVKKETLEKYGAVSEEVAREMLAGLKTDIGISTTGIAGPGGGTKDKPVGLVYIGIKVKNEVKVFKRELKGDRNKIRQRAMMHALYNLLKILSKKVR.

It belongs to the CinA family.

This chain is CinA-like protein, found in Fusobacterium nucleatum subsp. nucleatum (strain ATCC 25586 / DSM 15643 / BCRC 10681 / CIP 101130 / JCM 8532 / KCTC 2640 / LMG 13131 / VPI 4355).